We begin with the raw amino-acid sequence, 177 residues long: Large ribosomal subunit protein uL6 (177 aa).

The segment at Tyr-157–Lys-177 is disordered.

Belongs to the universal ribosomal protein uL6 family. Part of the 50S ribosomal subunit.

In terms of biological role, this protein binds to the 23S rRNA, and is important in its secondary structure. It is located near the subunit interface in the base of the L7/L12 stalk, and near the tRNA binding site of the peptidyltransferase center. The chain is Large ribosomal subunit protein uL6 from Caulobacter vibrioides (strain ATCC 19089 / CIP 103742 / CB 15) (Caulobacter crescentus).